Reading from the N-terminus, the 335-residue chain is GTPase Obg (335 aa).

The region spanning 1 to 158 (MFVDQITLEL…RQVELELKLI (158 aa)) is the Obg domain. Residues 126 to 145 (NTFFKTSVNRAPTKATPGKP) form a disordered region. The OBG-type G domain maps to 159–334 (ADIGLVGFPN…LYRFFTQRLA (176 aa)). GTP is bound by residues 165–172 (GFPNAGKS), 190–194 (FTTLA), 215–218 (DIPG), 285–288 (NKID), and 315–317 (SGL). Mg(2+) contacts are provided by S172 and T192.

Belongs to the TRAFAC class OBG-HflX-like GTPase superfamily. OBG GTPase family. In terms of assembly, monomer. Mg(2+) is required as a cofactor.

The protein resides in the cytoplasm. An essential GTPase which binds GTP, GDP and possibly (p)ppGpp with moderate affinity, with high nucleotide exchange rates and a fairly low GTP hydrolysis rate. Plays a role in control of the cell cycle, stress response, ribosome biogenesis and in those bacteria that undergo differentiation, in morphogenesis control. This Chlamydia pneumoniae (Chlamydophila pneumoniae) protein is GTPase Obg.